We begin with the raw amino-acid sequence, 369 residues long: Anhydro-N-acetylmuramic acid kinase (369 aa).

G12–D19 contributes to the ATP binding site.

It belongs to the anhydro-N-acetylmuramic acid kinase family.

The catalysed reaction is 1,6-anhydro-N-acetyl-beta-muramate + ATP + H2O = N-acetyl-D-muramate 6-phosphate + ADP + H(+). It functions in the pathway amino-sugar metabolism; 1,6-anhydro-N-acetylmuramate degradation. It participates in cell wall biogenesis; peptidoglycan recycling. Catalyzes the specific phosphorylation of 1,6-anhydro-N-acetylmuramic acid (anhMurNAc) with the simultaneous cleavage of the 1,6-anhydro ring, generating MurNAc-6-P. Is required for the utilization of anhMurNAc either imported from the medium or derived from its own cell wall murein, and thus plays a role in cell wall recycling. The chain is Anhydro-N-acetylmuramic acid kinase from Escherichia coli O157:H7.